We begin with the raw amino-acid sequence, 347 residues long: Dolichyl-diphosphooligosaccharide--protein glycosyltransferase subunit TUSC3 (347 aa).

The first 41 residues, 1–41 (MGARGAPSRRRQAGRRPRYLPTGSFPFLLLLLLLCIQLGGG), serve as a signal peptide directing secretion. Residues 42–196 (QKKKENLLAE…DVHIRVFRPP (155 aa)) lie on the Lumenal side of the membrane. The region spanning 59 to 187 (WSSRRSVFRM…LAKWIADRTD (129 aa)) is the Thioredoxin domain. The N-linked (GlcNAc...) asparagine glycan is linked to Asn-83. Cysteines 99 and 102 form a disulfide. Residues 197 to 217 (NYSGTIALALLVSLVGGLLYL) traverse the membrane as a helical segment. At 218-221 (RRNN) the chain is on the cytoplasmic side. Residues 222–242 (LEFIYNKTGWAMVSLCIVFAM) form a helical membrane-spanning segment. The Lumenal segment spans residues 243–276 (TSGQMWNHIRGPPYAHKNPHNGQVSYIHGSSQVQ). Residues 277–297 (FVAESHIILVLNAAITMGMDL) form a helical membrane-spanning segment. Residues 298–312 (LNEAATSKGDVGKRR) are Cytoplasmic-facing. Residues 313 to 333 (IICLVGLGLVVFFFSFLLSIF) traverse the membrane as a helical segment. Over 334–347 (RSKYHGYPYSFLIK) the chain is Lumenal.

This sequence belongs to the OST3/OST6 family. Accessory component of the STT3B-containing form of the oligosaccharyltransferase (OST) complex. OST exists in two different complex forms which contain common core subunits RPN1, RPN2, OST48, OST4, DAD1 and TMEM258, either STT3A or STT3B as catalytic subunits, and form-specific accessory subunits. OST can form stable complexes with the Sec61 complex or with both the Sec61 and TRAP complexes. The association of TUSC3 or MAGT1 with the STT3B-containing complex seems to be mutually exclusvice.

It localises to the endoplasmic reticulum membrane. The protein operates within protein modification; protein glycosylation. Acts as accessory component of the N-oligosaccharyl transferase (OST) complex which catalyzes the transfer of a high mannose oligosaccharide from a lipid-linked oligosaccharide donor to an asparagine residue within an Asn-X-Ser/Thr consensus motif in nascent polypeptide chains. Involved in N-glycosylation of STT3B-dependent substrates. Specifically required for the glycosylation of a subset of acceptor sites that are near cysteine residues; in this function seems to act redundantly with MAGT1. In its oxidized form proposed to form transient mixed disulfides with a glycoprotein substrate to facilitate access of STT3B to the unmodified acceptor site. Also has oxidoreductase-independent functions in the STT3B-containing OST complex possibly involving substrate recognition. Could indirectly play a role in Mg(2+) transport. The sequence is that of Dolichyl-diphosphooligosaccharide--protein glycosyltransferase subunit TUSC3 (TUSC3) from Bos taurus (Bovine).